The chain runs to 69 residues: Cell division protein ZapB (69 aa).

A coiled-coil region spans residues 3-60 (LELFNQLEQKVQNAVETIEMLKMEAEELREENTRLKQERDEWERRLNGLLGKFQEIED).

The protein belongs to the ZapB family. In terms of assembly, homodimer. The ends of the coiled-coil dimer bind to each other, forming polymers. Interacts with FtsZ.

It is found in the cytoplasm. In terms of biological role, non-essential, abundant cell division factor that is required for proper Z-ring formation. It is recruited early to the divisome by direct interaction with FtsZ, stimulating Z-ring assembly and thereby promoting cell division earlier in the cell cycle. Its recruitment to the Z-ring requires functional FtsA or ZipA. The sequence is that of Cell division protein ZapB from Chromohalobacter salexigens (strain ATCC BAA-138 / DSM 3043 / CIP 106854 / NCIMB 13768 / 1H11).